Reading from the N-terminus, the 156-residue chain is Arginine repressor (156 aa).

Belongs to the ArgR family.

The protein resides in the cytoplasm. Its pathway is amino-acid biosynthesis; L-arginine biosynthesis [regulation]. Its function is as follows. Regulates arginine biosynthesis genes. The sequence is that of Arginine repressor from Erwinia tasmaniensis (strain DSM 17950 / CFBP 7177 / CIP 109463 / NCPPB 4357 / Et1/99).